The sequence spans 87 residues: uncharacterized protein (87 aa).

Residues 21–41 traverse the membrane as a helical segment; it reads LSSSLYSVAFFLFFFPNFLFF.

It localises to the membrane. This is an uncharacterized protein from Saccharomyces cerevisiae (strain ATCC 204508 / S288c) (Baker's yeast).